Consider the following 1290-residue polypeptide: MAGVGTPCANGCGPSAPSEAEVLHLCRSLEVGTVMTLFYSKKSQRPERKTFQVKLETRQITWSRGADKIEGSIDIREIKEIRPGKTSRDFDRYQEDPAFRPDQSHCFVILYGMEFRLKTLSLQATSEDEVNMWIKGLTWLMEDTLQAATPLQIERWLRKQFYSVDRNREDRISAKDLKNMLSQVNYRVPNMRFLRERLTDFEQRSGDITYGQFAQLYRSLMYSAQKTMDLPFLETNTLRTGERPELCQVSLSEFQQFLLEYQGELWAVDRLQVQEFMLSFLRDPLREIEEPYFFLDELVTFLFSKENSVWNSQLDAVCPETMNNPLSHYWISSSHNTYLTGDQFSSESSLEAYARCLRMGCRCIELDCWDGPDGMPVIYHGHTLTTKIKFSDVLHTIKEHAFVASEYPVILSIEDHCSIAQQRNMAQHFRKVLGDTLLTKPVDIAADGLPSPNQLKRKILIKHKKLAEGSAYEEVPTSVMYSENDISNSIKNGILYLEDPVNHEWYPHYFVLTSSKIYYSEETSSDQGNEDEEEPKEASGSTELHSSEKWFHGKLGAGRDGRHIAERLLTEYCIETGAPDGSFLVRESETFVGDYTLSFWRNGKVQHCRIHSRQDAGTPKFFLTDNLVFDSLYDLITHYQQVPLRCNEFEMRLSEPVPQTNAHESKEWYHASLTRAQAEHMLMRVPRDGAFLVRKRNEPNSYAISFRAEGKIKHCRVQQEGQTVMLGNSEFDSLVDLISYYEKHPLYRKMKLRYPINEEALEKIGTAEPDYGALYEGRNPGFYVEANPMPTFKCAVKALFDYKAQREDELTFTKSAIIQNVEKQDGGWWRGDYGGKKQLWFPSNYVEEMINPAILEPEREHLDENSPLGDLLRGVLDVPACQIAIRPEGKNNRLFVFSISMPSVAQWSLDVAADSQEELQDWVKKIREVAQTADARLTEGKMMERRKKIALELSELVVYCRPVPFDEEKIGTERACYRDMSSFPETKAEKYVNKAKGKKFLQYNRLQLSRIYPKGQRLDSSNYDPLPMWICGSQLVALNFQTPDKPMQMNQALFMAGGHCGYVLQPSTMRDEAFDPFDKSSLRGLEPCVICIEVLGARHLPKNGRGIVCPFVEIEVAGAEYDSTKQKTEFVVDNGLNPVWPAKPFHFQISNPEFAFLRFVVYEEDMFSDQNFLAQATFPVKGLKTGYRAVPLKNNYSEDLELASLLIKIDIFPAKENGDLSPFSGTSLRERASDASSQLFHVRAREGSFEARYQQPFEDFRISQEHLADHFDSRERRAPRRTRVNGDNRL.

Residue A2 is modified to N-acetylalanine. Residues 27–142 form the PH 1 domain; sequence RSLEVGTVMT…WIKGLTWLME (116 aa). The EF-hand domain occupies 152-187; the sequence is QIERWLRKQFYSVDRNREDRISAKDLKNMLSQVNYR. Ca(2+)-binding residues include D165, N167, E169, R171, and D176. The region spanning 320–464 is the PI-PLC X-box domain; it reads ETMNNPLSHY…LKRKILIKHK (145 aa). Active-site residues include H335 and H380. A PH 2; first part domain is found at 489–523; the sequence is SIKNGILYLEDPVNHEWYPHYFVLTSSKIYYSEET. Y506 carries the post-translational modification Phosphotyrosine. The tract at residues 522–546 is disordered; it reads ETSSDQGNEDEEEPKEASGSTELHS. SH2 domains lie at 550–657 and 668–756; these read WFHG…SEPV and WYHA…RYPI. Y771 bears the Phosphotyrosine; by SYK mark. Y775 carries the phosphotyrosine modification. At Y783 the chain carries Phosphotyrosine; by ITK, SYK and TXK. Positions 791–851 constitute an SH3 domain; it reads TFKCAVKALF…PSNYVEEMIN (61 aa). The 37-residue stretch at 895 to 931 folds into the PH 2; second part domain; it reads FVFSISMPSVAQWSLDVAADSQEELQDWVKKIREVAQ. In terms of domain architecture, PI-PLC Y-box spans 953-1070; the sequence is LSELVVYCRP…GYVLQPSTMR (118 aa). A Phosphotyrosine modification is found at Y977. Residues 1071-1194 enclose the C2 domain; that stretch reads DEAFDPFDKS…TGYRAVPLKN (124 aa). Phosphoserine is present on residues S1221, S1227, S1233, and S1248. Y1253 carries the phosphotyrosine modification. At S1263 the chain carries Phosphoserine. The disordered stretch occupies residues 1271–1290; the sequence is FDSRERRAPRRTRVNGDNRL.

Interacts with AGAP2 via its SH3 domain. Interacts (via SH2 domain) with RET. Interacts with FLT1 (tyrosine-phosphorylated). Interacts (via SH2 domain) with FGFR1, FGFR2, FGFR3 and FGFR4 (phosphorylated). Interacts with LAT (phosphorylated) upon TCR activation. Interacts (via SH3 domain) with the Pro-rich domain of TNK1. Associates with BLNK, VAV1, GRB2 and NCK1 in a B-cell antigen receptor-dependent fashion. Interacts with CBLB in activated T-cells; which inhibits phosphorylation. Interacts with SHB. Interacts (via SH3 domain) with the Arg/Gly-rich-flanked Pro-rich domains of KHDRBS1/SAM68. This interaction is selectively regulated by arginine methylation of KHDRBS1/SAM68. Interacts with INPP5D/SHIP1, THEMIS and CLNK. Interacts with AXL, FLT4 and KIT. Interacts with RALGPS1. Interacts (via the SH2 domains) with VIL1 (phosphorylated at C-terminus tyrosine phosphorylation sites). Interacts (via SH2 domain) with PDGFRA and PDGFRB (tyrosine phosphorylated). Interacts with PIP5K1C. Interacts with NTRK1 and NTRK2 (phosphorylated upon ligand-binding). Interacts with SYK; activates PLCG1. Interacts with GRB2, LAT and THEMIS upon TCR activation in thymocytes. Interacts with TESPA1; the association is increased with prolonged stimulation of the TCR and may facilitate the assembly of the LAT signalosome. Interacts (via C-terminal proline-rich domain (PRD)) with PLCG1 (via SH3 domain); this interaction leads to guanine nucleotide exchange from PlCG1 to DNM1 and enhances DNM1-dependent endocytosis. Ca(2+) serves as cofactor. In terms of processing, ubiquitinated by CBLB in activated T-cells. Post-translationally, tyrosine phosphorylated in response to signaling via activated FLT3, KIT and PDGFRA. Tyrosine phosphorylated by activated FGFR1, FGFR2, FGFR3 and FGFR4. Tyrosine phosphorylated by activated FLT1 and KDR. Tyrosine phosphorylated by activated PDGFRB. The receptor-mediated activation of PLCG1 involves its phosphorylation by tyrosine kinases, in response to ligation of a variety of growth factor receptors and immune system receptors. For instance, SYK phosphorylates and activates PLCG1 in response to ligation of the B-cell receptor. May be dephosphorylated by PTPRJ. Phosphorylated by ITK and TXK on Tyr-783 upon TCR activation in T-cells.

The protein resides in the cell projection. It is found in the lamellipodium. It localises to the ruffle. It catalyses the reaction a 1,2-diacyl-sn-glycero-3-phospho-(1D-myo-inositol-4,5-bisphosphate) + H2O = 1D-myo-inositol 1,4,5-trisphosphate + a 1,2-diacyl-sn-glycerol + H(+). It carries out the reaction a 1,2-diacyl-sn-glycero-3-phospho-(1D-myo-inositol) + H2O = 1D-myo-inositol 1-phosphate + a 1,2-diacyl-sn-glycerol + H(+). Its activity is regulated as follows. Activated by phosphorylation on tyrosine residues. Its function is as follows. Mediates the production of the second messenger molecules diacylglycerol (DAG) and inositol 1,4,5-trisphosphate (IP3). Plays an important role in the regulation of intracellular signaling cascades. Becomes activated in response to ligand-mediated activation of receptor-type tyrosine kinases, such as PDGFRA, PDGFRB, EGFR, FGFR1, FGFR2, FGFR3 and FGFR4. Plays a role in actin reorganization and cell migration. Guanine nucleotide exchange factor that binds the GTPase DNM1 and catalyzes the dissociation of GDP, allowing a GTP molecule to bind in its place, therefore enhancing DNM1-dependent endocytosis. This chain is 1-phosphatidylinositol 4,5-bisphosphate phosphodiesterase gamma-1, found in Rattus norvegicus (Rat).